Reading from the N-terminus, the 938-residue chain is Isoleucine--tRNA ligase (938 aa).

The short motif at 58-68 (PYANGSIHIGH) is the 'HIGH' region element. At K183 the chain carries N6-acetyllysine. E561 is a binding site for L-isoleucyl-5'-AMP. A 'KMSKS' region motif is present at residues 602–606 (KMSKS). K605 serves as a coordination point for ATP. Zn(2+)-binding residues include C901, C904, C921, and C924.

It belongs to the class-I aminoacyl-tRNA synthetase family. IleS type 1 subfamily. Monomer. Zn(2+) serves as cofactor.

The protein resides in the cytoplasm. It carries out the reaction tRNA(Ile) + L-isoleucine + ATP = L-isoleucyl-tRNA(Ile) + AMP + diphosphate. Catalyzes the attachment of isoleucine to tRNA(Ile). As IleRS can inadvertently accommodate and process structurally similar amino acids such as valine, to avoid such errors it has two additional distinct tRNA(Ile)-dependent editing activities. One activity is designated as 'pretransfer' editing and involves the hydrolysis of activated Val-AMP. The other activity is designated 'posttransfer' editing and involves deacylation of mischarged Val-tRNA(Ile). The protein is Isoleucine--tRNA ligase of Escherichia coli (strain 55989 / EAEC).